Consider the following 667-residue polypeptide: Mediator of RNA polymerase II transcription subunit 17 (667 aa).

Positions 172–197 (KRRALQEAVQVLDMAQKQRQRASSNL) form a coiled coil.

Belongs to the Mediator complex subunit 17 family. In terms of assembly, component of the Mediator complex.

It localises to the nucleus. Its function is as follows. Component of the Mediator complex, a coactivator involved in regulated gene transcription of nearly all RNA polymerase II-dependent genes. Mediator functions as a bridge to convey information from gene-specific regulatory proteins to the basal RNA polymerase II transcription machinery. Mediator is recruited to promoters by direct interactions with regulatory proteins and serves as a scaffold for the assembly of a functional preinitiation complex with RNA polymerase II and the general transcription factors. This is Mediator of RNA polymerase II transcription subunit 17 (mdt-17) from Caenorhabditis elegans.